A 418-amino-acid chain; its full sequence is Gamma-glutamyl phosphate reductase (418 aa).

It belongs to the gamma-glutamyl phosphate reductase family.

It localises to the cytoplasm. It carries out the reaction L-glutamate 5-semialdehyde + phosphate + NADP(+) = L-glutamyl 5-phosphate + NADPH + H(+). Its pathway is amino-acid biosynthesis; L-proline biosynthesis; L-glutamate 5-semialdehyde from L-glutamate: step 2/2. In terms of biological role, catalyzes the NADPH-dependent reduction of L-glutamate 5-phosphate into L-glutamate 5-semialdehyde and phosphate. The product spontaneously undergoes cyclization to form 1-pyrroline-5-carboxylate. This Pelobacter propionicus (strain DSM 2379 / NBRC 103807 / OttBd1) protein is Gamma-glutamyl phosphate reductase.